We begin with the raw amino-acid sequence, 123 residues long: Large ribosomal subunit protein bL12 (123 aa).

It belongs to the bacterial ribosomal protein bL12 family. Homodimer. Part of the ribosomal stalk of the 50S ribosomal subunit. Forms a multimeric L10(L12)X complex, where L10 forms an elongated spine to which 2 to 4 L12 dimers bind in a sequential fashion. Binds GTP-bound translation factors.

Forms part of the ribosomal stalk which helps the ribosome interact with GTP-bound translation factors. Is thus essential for accurate translation. The sequence is that of Large ribosomal subunit protein bL12 from Bartonella quintana (strain Toulouse) (Rochalimaea quintana).